A 273-amino-acid chain; its full sequence is Dermonecrotic toxin LafSicTox-betaIE1 (273 aa).

Residue histidine 5 is part of the active site. Mg(2+) is bound by residues glutamate 25 and aspartate 27. Catalysis depends on histidine 41, which acts as the Nucleophile. Cystine bridges form between cysteine 45/cysteine 51 and cysteine 47/cysteine 189. Residue aspartate 85 participates in Mg(2+) binding. N-linked (GlcNAc...) asparagine glycosylation occurs at asparagine 250.

This sequence belongs to the arthropod phospholipase D family. Class II subfamily. Mg(2+) serves as cofactor. In terms of tissue distribution, expressed by the venom gland.

The protein localises to the secreted. The catalysed reaction is an N-(acyl)-sphingosylphosphocholine = an N-(acyl)-sphingosyl-1,3-cyclic phosphate + choline. It catalyses the reaction an N-(acyl)-sphingosylphosphoethanolamine = an N-(acyl)-sphingosyl-1,3-cyclic phosphate + ethanolamine. It carries out the reaction a 1-acyl-sn-glycero-3-phosphocholine = a 1-acyl-sn-glycero-2,3-cyclic phosphate + choline. The enzyme catalyses a 1-acyl-sn-glycero-3-phosphoethanolamine = a 1-acyl-sn-glycero-2,3-cyclic phosphate + ethanolamine. Functionally, dermonecrotic toxins cleave the phosphodiester linkage between the phosphate and headgroup of certain phospholipids (sphingolipid and lysolipid substrates), forming an alcohol (often choline) and a cyclic phosphate. This toxin acts on sphingomyelin (SM). It may also act on ceramide phosphoethanolamine (CPE), lysophosphatidylcholine (LPC) and lysophosphatidylethanolamine (LPE), but not on lysophosphatidylserine (LPS), and lysophosphatidylglycerol (LPG). It acts by transphosphatidylation, releasing exclusively cyclic phosphate products as second products. Induces dermonecrosis, hemolysis, increased vascular permeability, edema, inflammatory response, and platelet aggregation. The protein is Dermonecrotic toxin LafSicTox-betaIE1 of Loxosceles aff. spinulosa (strain GJB-2008) (Recluse spider).